Here is an 888-residue protein sequence, read N- to C-terminus: Valine--tRNA ligase (888 aa).

Positions 43–53 match the 'HIGH' region motif; the sequence is PNVTGTLHLGH. Residues 538 to 542 carry the 'KMSKS' region motif; sequence KMSKS. Lys541 is a binding site for ATP. Residues 821–888 adopt a coiled-coil conformation; it reads LIDLDAERAR…RLKAALGRLA (68 aa).

The protein belongs to the class-I aminoacyl-tRNA synthetase family. ValS type 1 subfamily. As to quaternary structure, monomer.

Its subcellular location is the cytoplasm. It catalyses the reaction tRNA(Val) + L-valine + ATP = L-valyl-tRNA(Val) + AMP + diphosphate. Functionally, catalyzes the attachment of valine to tRNA(Val). As ValRS can inadvertently accommodate and process structurally similar amino acids such as threonine, to avoid such errors, it has a 'posttransfer' editing activity that hydrolyzes mischarged Thr-tRNA(Val) in a tRNA-dependent manner. In Gluconobacter oxydans (strain 621H) (Gluconobacter suboxydans), this protein is Valine--tRNA ligase.